Here is a 309-residue protein sequence, read N- to C-terminus: Mitochondrial succinate-fumarate transporter 1 (309 aa).

Solcar repeat units lie at residues 11–96 (IPPY…FQTA), 108–196 (RGRF…FDIL), and 208–298 (LQPW…VTGL). 6 helical membrane-spanning segments follow: residues 17-37 (AVSG…IDVI), 65-85 (VRAL…KYTL), 111-131 (FLSG…PFEV), 171-191 (GAAP…TAKN), 214-234 (MISG…FDVV), and 273-293 (GLLP…AVAD).

This sequence belongs to the mitochondrial carrier (TC 2.A.29) family. In terms of tissue distribution, expressed in root tips, cotyledons, hypocotyls, leaves, trichomes, stems, flowers, carpels, anthers, pollen and abscission zone of siliques.

It is found in the mitochondrion inner membrane. Its function is as follows. May transport cytoplasmic succinate, derived from fatty acid oxidation, into the mitochondrial matrix in exchange of fumarate during lipid mobilization in seed germination. Conversion of seed-reserved triacylglycerols into sucrose is necessary for growth before the onset of photosynthesis and involves fatty acid beta-oxidation, the glyoxylate cycle and gluconeogenesis. This Arabidopsis thaliana (Mouse-ear cress) protein is Mitochondrial succinate-fumarate transporter 1 (SFC1).